Here is a 165-residue protein sequence, read N- to C-terminus: uncharacterized protein (165 aa).

Residues 20-40 (INLIASIVLWLLFVITVIGTF) traverse the membrane as a helical segment. An N-linked (GlcNAc...) asparagine; by host glycan is attached at Asn-51. The helical transmembrane segment at 97-117 (VGIIVILIFMLMIIMNGFYQM) threads the bilayer.

The protein resides in the membrane. This is an uncharacterized protein from Acanthamoeba polyphaga (Amoeba).